Consider the following 1178-residue polypeptide: Pyruvate carboxylase, mitochondrial (1178 aa).

The transit peptide at 1 to 20 directs the protein to the mitochondrion; it reads MLKFQTVRGGLRLLGVRRSS. Phosphoserine is present on Ser21. 2 positions are modified to N6-acetyllysine: Lys35 and Lys39. Positions 36-486 constitute a Biotin carboxylation domain; the sequence is PIKKVMVANR…DTQFIDENPE (451 aa). Lys79 bears the N6-acetyllysine; alternate mark. Lys79 is modified (N6-succinyllysine; alternate). An N6-acetyllysine mark is found at Lys148 and Lys152. ATP is bound by residues Lys152 and Glu236. The ATP-grasp domain maps to 156-353; the sequence is RAIAIAAGVP…LVHAQIHVSE (198 aa). The residue at position 241 (Lys241) is an N6-acetyllysine. His271 contributes to the ATP binding site. Residues Lys297, Lys316, and Lys319 each carry the N6-acetyllysine modification. Residue Arg328 is part of the active site. Lys434 carries the post-translational modification N6-acetyllysine. Lys442 is subject to N6-succinyllysine. Residues 563–832 form the Pyruvate carboxyltransferase domain; it reads LLLMDTTFRD…DTEVPLERVF (270 aa). Substrate is bound at residue 571–575; the sequence is RDAHQ. Residue Asp572 participates in Mn(2+) binding. Lys589 is subject to N6-acetyllysine. Residue Arg644 coordinates substrate. N6-acetyllysine is present on residues Lys661 and Lys717. Lys741 is a binding site for Mn(2+). At Lys741 the chain carries N6-carboxylysine. Lys748 carries the N6-acetyllysine modification. Residues His771 and His773 each coordinate Mn(2+). Lys892 carries the post-translational modification N6-acetyllysine. Position 908 (Thr908) interacts with substrate. Residue Lys969 is modified to N6-acetyllysine. Lys988 carries the N6-acetyllysine; alternate modification. Residue Lys988 is modified to N6-succinyllysine; alternate. Position 992 is an N6-acetyllysine (Lys992). Thr1003 carries the phosphothreonine modification. Lys1061, Lys1090, and Lys1124 each carry N6-acetyllysine. The 70-residue stretch at 1109 to 1178 folds into the Biotinyl-binding domain; the sequence is KGQIGAPMPG…EGDDLILEIE (70 aa). An N6-biotinyllysine modification is found at Lys1144.

In terms of assembly, homotetramer. Interacts (via the biotin carboxylation domain) with SIRT4. Biotin is required as a cofactor. Requires Mn(2+) as cofactor. Acetylation of Lys-316 is observed in liver mitochondria from fasted mice but not from fed mice. Acetylation of Lys-748 might play a role in catalytic activity regulation. As to expression, liver, kidney, adipose tissue, liver and brain.

Its subcellular location is the mitochondrion matrix. The enzyme catalyses hydrogencarbonate + pyruvate + ATP = oxaloacetate + ADP + phosphate + H(+). It functions in the pathway carbohydrate biosynthesis; gluconeogenesis. Functionally, pyruvate carboxylase catalyzes a 2-step reaction, involving the ATP-dependent carboxylation of the covalently attached biotin in the first step and the transfer of the carboxyl group to pyruvate in the second. Catalyzes in a tissue specific manner, the initial reactions of glucose (liver, kidney) and lipid (adipose tissue, liver, brain) synthesis from pyruvate. This is Pyruvate carboxylase, mitochondrial (Pc) from Mus musculus (Mouse).